The primary structure comprises 333 residues: Late embryogenesis abundant protein 1 (333 aa).

Disordered stretches follow at residues 1-20 and 116-246; these read MASR…RRAA and KDYT…GQGQ. Residues 3–52 are a coiled coil; that stretch reads SRQDRREARAEADARRAAEEIARARDERVMQAEVDARSAADEIARARADR. 3 stretches are compositionally biased toward basic and acidic residues: residues 116–163, 172–219, and 227–241; these read KDYT…KDAV, EATK…DATK, and DKAR…DATD.

This sequence belongs to the LEA type 4 family.

The polypeptide is Late embryogenesis abundant protein 1 (LEA1) (Oryza sativa subsp. indica (Rice)).